A 94-amino-acid polypeptide reads, in one-letter code: Co-chaperonin GroES (94 aa).

It belongs to the GroES chaperonin family. In terms of assembly, heptamer of 7 subunits arranged in a ring. Interacts with the chaperonin GroEL.

Its subcellular location is the cytoplasm. In terms of biological role, together with the chaperonin GroEL, plays an essential role in assisting protein folding. The GroEL-GroES system forms a nano-cage that allows encapsulation of the non-native substrate proteins and provides a physical environment optimized to promote and accelerate protein folding. GroES binds to the apical surface of the GroEL ring, thereby capping the opening of the GroEL channel. The sequence is that of Co-chaperonin GroES from Bacillus cereus (strain ATCC 14579 / DSM 31 / CCUG 7414 / JCM 2152 / NBRC 15305 / NCIMB 9373 / NCTC 2599 / NRRL B-3711).